A 269-amino-acid chain; its full sequence is MKEYNLNDTHLLQLDSQKDPIALHTEDLHVFYGDNEAIKGVDLQFEKNKITALIGPSGCGKSTYLRSLNRMNDGIANSRVTGKIMYKDVDVNTKEVDVYEMRKRIGMVFQRPNPFSKSIYENITFALKQHGEKDKKKLDEIVETSLKQAALWDQVKDNLNKSALALSGGQQQRLCIARAIAMKPDILLLDEPASALDPISTGTVEETLVNLKDDYTIIIVTHNMQQAARISDYTAFFYMGKVIEYDHTRKIFTRPKIQATEDYVSGHFG.

An ABC transporter domain is found at 23 to 264 (LHTEDLHVFY…PKIQATEDYV (242 aa)). 55–62 (GPSGCGKS) contacts ATP.

Belongs to the ABC transporter superfamily. Phosphate importer (TC 3.A.1.7) family. The complex is composed of two ATP-binding proteins (PstB), two transmembrane proteins (PstC and PstA) and a solute-binding protein (PstS).

It localises to the cell membrane. It catalyses the reaction phosphate(out) + ATP + H2O = ADP + 2 phosphate(in) + H(+). Its function is as follows. Part of the ABC transporter complex PstSACB involved in phosphate import. Responsible for energy coupling to the transport system. In Enterococcus faecalis (strain ATCC 700802 / V583), this protein is Phosphate import ATP-binding protein PstB 2.